The following is a 110-amino-acid chain: Integration host factor subunit beta (110 aa).

It belongs to the bacterial histone-like protein family. Heterodimer of an alpha and a beta chain.

This protein is one of the two subunits of integration host factor, a specific DNA-binding protein that functions in genetic recombination as well as in transcriptional and translational control. The chain is Integration host factor subunit beta from Parvibaculum lavamentivorans (strain DS-1 / DSM 13023 / NCIMB 13966).